The following is an 80-amino-acid chain: Small ribosomal subunit protein uS17 (80 aa).

The protein belongs to the universal ribosomal protein uS17 family. As to quaternary structure, part of the 30S ribosomal subunit.

Functionally, one of the primary rRNA binding proteins, it binds specifically to the 5'-end of 16S ribosomal RNA. The polypeptide is Small ribosomal subunit protein uS17 (Brucella abortus (strain S19)).